A 590-amino-acid polypeptide reads, in one-letter code: Protein I'm not dead yet (590 aa).

11 helical membrane-spanning segments follow: residues 43-63, 82-102, 115-135, 153-173, 224-244, 270-290, 329-349, 373-393, 457-477, 509-529, and 540-560; these read GLVVFLVPLLCLPVMLLNEGA, ALPLYVTSMIPIVAFPIMGIM, TLVMFMGGIMVALAVEYCNLH, LHFGLIMVTMFLSMWISNAAC, LCYYLGIAYASSLGGCGTIIG, TFMFYSVPSMLVYTLLTFVFL, LGPMSIHEIQVMILFIFMVVM, SMPTIFVVVMCFMLPANYAFL, VLPNSVLLLVVILVAVFLTAF, AGLACSMAFHLPVSTPPNALV, and MAIAGIGPTIITIITLFVFCQ.

Belongs to the SLC13A/DASS transporter (TC 2.A.47) family. NADC subfamily. As to expression, in adults, abundantly expressed in the fat body, basolateral region of midgut cells and oenocytes. Low level expression is seen in the halteres, procardia, restricted regions of the esophagus and hindgut, base of the legs and in a subset of cells in the third segment of the antennae.

It is found in the basolateral cell membrane. In terms of biological role, cation-independent electroneutral transporter (not associated with membrane depolarization) of a variety of tricarboxylic and dicarboxylic acid-cycle intermediates. There is also small, but detectable, transport of monocarboxylics. Transport is through the epithelium of the gut and across the plasma membranes of organs involved in intermediary metabolism and storage. Affinity for substrates is citrate &gt; succinate &gt; pyruvate. Fumarate, a-ketoglutarate, and glutarate are also transported, but not lactate. Transport mechanism that is not coupled to Na(+), K(+), or Cl(-). Function is shown in Xenopus oocytes and human retinal pigment epithelial (HRPE) cell lines. This Drosophila melanogaster (Fruit fly) protein is Protein I'm not dead yet (Indy).